We begin with the raw amino-acid sequence, 312 residues long: MSQLNSVWVFSDNPERYAELFGGAQQWGQQVYAIVQNTDQAQAVMPYGPKCLYVLAQNDALQRTENYAESIAALLKDKHPAMLLLAATKRGKALAARLSVQLNAALVNDATAVDIVDGHICAEHRMYGGLAFAQEKINSPLAIITLAPGVQEPCTSDTSHQCPTETVPYVAPRHEILCRERRAKAASSVDLSKAKRVVGVGRGLAAQDDLKMVHELAAVLNAEVGCSRPIAEGENWMERERYIGVSGVLLKSDLYLTLGISGQIQHMVGGNGAKVIVAINKDKNAPIFNYADYGLVGDIYKVVPALISQLSR.

254-282 (LYLTLGISGQIQHMVGGNGAKVIVAINKD) provides a ligand contact to FAD.

It belongs to the ETF alpha-subunit/FixB family. YdiR and YdiQ form a heterodimer.

Functionally, may play a role in a redox process. The polypeptide is Putative electron transfer flavoprotein subunit YdiR (ydiR) (Escherichia coli (strain K12)).